The following is a 231-amino-acid chain: Protein crossbronx homolog (231 aa).

One can recognise a UBC core domain in the interval 14–168 (LQEYKILTEY…VEECVRLSQA (155 aa)).

Belongs to the ubiquitin-conjugating enzyme family. FTS subfamily.

The protein is Protein crossbronx homolog of Culex quinquefasciatus (Southern house mosquito).